The primary structure comprises 229 residues: Putative N-acetylmannosamine-6-phosphate 2-epimerase (229 aa).

This sequence belongs to the NanE family.

The enzyme catalyses an N-acyl-D-glucosamine 6-phosphate = an N-acyl-D-mannosamine 6-phosphate. It functions in the pathway amino-sugar metabolism; N-acetylneuraminate degradation; D-fructose 6-phosphate from N-acetylneuraminate: step 3/5. Converts N-acetylmannosamine-6-phosphate (ManNAc-6-P) to N-acetylglucosamine-6-phosphate (GlcNAc-6-P). This Salmonella agona (strain SL483) protein is Putative N-acetylmannosamine-6-phosphate 2-epimerase.